Consider the following 99-residue polypeptide: DNA-binding protein Fis (99 aa).

The H-T-H motif DNA-binding region spans 75–94 (QTRAASIMGINRSTLRKKLK).

Belongs to the transcriptional regulatory Fis family. In terms of assembly, homodimer.

In terms of biological role, activates ribosomal RNA transcription. Plays a direct role in upstream activation of rRNA promoters. The protein is DNA-binding protein Fis of Buchnera aphidicola subsp. Schizaphis graminum (strain Sg).